We begin with the raw amino-acid sequence, 369 residues long: Sulfate permease 2, chloroplastic (369 aa).

The interval 1–21 (MASTTLLQPALGLPSRVGPRS) is disordered. A chloroplast-targeting transit peptide spans 1–82 (MASTTLLQPA…QQSRGDLLVS (82 aa)). The next 5 membrane-spanning stretches (helical) occupy residues 110 to 130 (VGVA…NVFV), 156 to 176 (TLML…VAAI), 187 to 207 (VFLM…TGLM), 229 to 249 (VVFA…PFVV), and 335 to 355 (TEAA…TLWI). Residues 153–356 (LKMTLMLAFV…ALALGTLWIK (204 aa)) enclose the ABC transmembrane type-1 domain.

The protein belongs to the ATP-binding cassette (ABC) (TC 3.A.1) superfamily. Part of the chloroplast sulfate permease holocomplex. May form a heterodimer with SLUP1.

The protein localises to the plastid. The protein resides in the chloroplast membrane. Its function is as follows. Part of the ABC-type chloroplast envelope-localized sulfate transporter. This Chlamydomonas reinhardtii (Chlamydomonas smithii) protein is Sulfate permease 2, chloroplastic (SULP2).